A 268-amino-acid polypeptide reads, in one-letter code: Energy-coupling factor transporter transmembrane protein EcfT (268 aa).

Transmembrane regions (helical) follow at residues 29 to 49 (VFIF…TVAV), 75 to 95 (IIIV…EVIV), 107 to 127 (LIEG…ASLL), 152 to 172 (LPTH…PTLI), and 242 to 262 (WGLK…AVMA).

Belongs to the energy-coupling factor EcfT family. As to quaternary structure, forms a stable energy-coupling factor (ECF) transporter complex composed of 2 membrane-embedded substrate-binding proteins (S component), 2 ATP-binding proteins (A component) and 2 transmembrane proteins (T component). May be able to interact with more than 1 S component at a time.

The protein localises to the cell membrane. In terms of biological role, transmembrane (T) component of an energy-coupling factor (ECF) ABC-transporter complex. Unlike classic ABC transporters this ECF transporter provides the energy necessary to transport a number of different substrates. The sequence is that of Energy-coupling factor transporter transmembrane protein EcfT from Bacillus selenitireducens (strain ATCC 700615 / DSM 15326 / MLS10).